The sequence spans 468 residues: Ubiquitin carboxyl-terminal hydrolase 17-like protein B (468 aa).

The segment at 1–20 (MVVALSFPEADPAMSPPSAP) is disordered. The USP domain occupies 51–348 (CGLQNTGNSC…NAYVLFYVQQ (298 aa)). The active-site Nucleophile is the Cys60. Catalysis depends on His307, which acts as the Proton acceptor. Positions 374 to 449 (KKSGEKKHNK…GGQNLRNTEG (76 aa)) are disordered. Residues 394-403 (CENREKRSSK) show a composition bias toward basic and acidic residues. The segment covering 422 to 434 (GQKQENTKLTPQE) has biased composition (polar residues).

The protein belongs to the peptidase C19 family. USP17 subfamily. In terms of processing, ubiquitinated. As to expression, detected in brain, heart, liver, lung, kidney, ovary and spleen.

The enzyme catalyses Thiol-dependent hydrolysis of ester, thioester, amide, peptide and isopeptide bonds formed by the C-terminal Gly of ubiquitin (a 76-residue protein attached to proteins as an intracellular targeting signal).. Inhibited by ubiquitin aldehyde. In terms of biological role, deubiquitinating enzyme that removes conjugated ubiquitin from specific proteins to regulate different cellular processes. The sequence is that of Ubiquitin carboxyl-terminal hydrolase 17-like protein B from Mus musculus (Mouse).